The following is a 356-amino-acid chain: 5-formaminoimidazole-4-carboxamide-1-(beta)-D-ribofuranosyl 5'-monophosphate synthetase (356 aa).

5-amino-1-(5-phospho-beta-D-ribosyl)imidazole-4-carboxamide-binding residues include histidine 27 and serine 94. One can recognise an ATP-grasp domain in the interval 101–333; sequence TENFAELTVP…YADLIQEDLS (233 aa). Residues 145–196 and glutamate 226 contribute to the ATP site; that span reads PRDI…TRYY. Asparagine 255 is a 5-amino-1-(5-phospho-beta-D-ribosyl)imidazole-4-carboxamide binding site. Mg(2+)-binding residues include glutamate 293 and glutamate 306.

Belongs to the phosphohexose mutase family. The cofactor is Mg(2+). Mn(2+) serves as cofactor.

The enzyme catalyses 5-amino-1-(5-phospho-beta-D-ribosyl)imidazole-4-carboxamide + formate + ATP = 5-formamido-1-(5-phospho-D-ribosyl)imidazole-4-carboxamide + ADP + phosphate. It functions in the pathway purine metabolism; IMP biosynthesis via de novo pathway; 5-formamido-1-(5-phospho-D-ribosyl)imidazole-4-carboxamide from 5-amino-1-(5-phospho-D-ribosyl)imidazole-4-carboxamide (formate route): step 1/1. In terms of biological role, catalyzes the ATP- and formate-dependent formylation of 5-aminoimidazole-4-carboxamide-1-beta-d-ribofuranosyl 5'-monophosphate (AICAR) to 5-formaminoimidazole-4-carboxamide-1-beta-d-ribofuranosyl 5'-monophosphate (FAICAR) in the absence of folates. The sequence is that of 5-formaminoimidazole-4-carboxamide-1-(beta)-D-ribofuranosyl 5'-monophosphate synthetase from Methanosarcina acetivorans (strain ATCC 35395 / DSM 2834 / JCM 12185 / C2A).